The sequence spans 248 residues: Aspartate/glutamate leucyltransferase (248 aa).

This sequence belongs to the R-transferase family. Bpt subfamily.

It is found in the cytoplasm. It carries out the reaction N-terminal L-glutamyl-[protein] + L-leucyl-tRNA(Leu) = N-terminal L-leucyl-L-glutamyl-[protein] + tRNA(Leu) + H(+). The catalysed reaction is N-terminal L-aspartyl-[protein] + L-leucyl-tRNA(Leu) = N-terminal L-leucyl-L-aspartyl-[protein] + tRNA(Leu) + H(+). Its function is as follows. Functions in the N-end rule pathway of protein degradation where it conjugates Leu from its aminoacyl-tRNA to the N-termini of proteins containing an N-terminal aspartate or glutamate. The sequence is that of Aspartate/glutamate leucyltransferase from Methylorubrum populi (strain ATCC BAA-705 / NCIMB 13946 / BJ001) (Methylobacterium populi).